The sequence spans 188 residues: Holliday junction branch migration complex subunit RuvA (188 aa).

A domain I region spans residues 1–64; it reads MIAGISGRVL…QDGITLYGFS (64 aa). The domain II stretch occupies residues 65-143; it reads NERKKELFLS…SAGIKDMRIY (79 aa). Residue Tyr143 is a region of interest, flexible linker. The segment at 143–188 is domain III; it reads YHESLEALISLGYPEKQAREAVKHVYREGMKTSELIKEALKFLSQR.

The protein belongs to the RuvA family. In terms of assembly, homotetramer. Forms an RuvA(8)-RuvB(12)-Holliday junction (HJ) complex. HJ DNA is sandwiched between 2 RuvA tetramers; dsDNA enters through RuvA and exits via RuvB. An RuvB hexamer assembles on each DNA strand where it exits the tetramer. Each RuvB hexamer is contacted by two RuvA subunits (via domain III) on 2 adjacent RuvB subunits; this complex drives branch migration. In the full resolvosome a probable DNA-RuvA(4)-RuvB(12)-RuvC(2) complex forms which resolves the HJ.

The protein resides in the cytoplasm. Its function is as follows. The RuvA-RuvB-RuvC complex processes Holliday junction (HJ) DNA during genetic recombination and DNA repair, while the RuvA-RuvB complex plays an important role in the rescue of blocked DNA replication forks via replication fork reversal (RFR). RuvA specifically binds to HJ cruciform DNA, conferring on it an open structure. The RuvB hexamer acts as an ATP-dependent pump, pulling dsDNA into and through the RuvAB complex. HJ branch migration allows RuvC to scan DNA until it finds its consensus sequence, where it cleaves and resolves the cruciform DNA. The protein is Holliday junction branch migration complex subunit RuvA of Thermotoga petrophila (strain ATCC BAA-488 / DSM 13995 / JCM 10881 / RKU-1).